We begin with the raw amino-acid sequence, 115 residues long: Large ribosomal subunit protein eL30 (115 aa).

It belongs to the eukaryotic ribosomal protein eL30 family. As to quaternary structure, component of the large ribosomal subunit.

The protein resides in the cytoplasm. Functionally, component of the large ribosomal subunit. The ribosome is a large ribonucleoprotein complex responsible for the synthesis of proteins in the cell. The chain is Large ribosomal subunit protein eL30 (RPL30) from Gallus gallus (Chicken).